The following is a 264-amino-acid chain: Thymidylate synthase (264 aa).

Arg-21 is a dUMP binding site. A (6R)-5,10-methylene-5,6,7,8-tetrahydrofolate-binding site is contributed by His-51. Position 126–127 (Arg-126–Arg-127) interacts with dUMP. Catalysis depends on Cys-146, which acts as the Nucleophile. DUMP-binding positions include Arg-166–Asp-169, Asn-177, and His-207–Tyr-209. Asp-169 is a (6R)-5,10-methylene-5,6,7,8-tetrahydrofolate binding site. (6R)-5,10-methylene-5,6,7,8-tetrahydrofolate is bound at residue Ser-263.

Belongs to the thymidylate synthase family. Bacterial-type ThyA subfamily. In terms of assembly, homodimer.

The protein resides in the cytoplasm. The enzyme catalyses dUMP + (6R)-5,10-methylene-5,6,7,8-tetrahydrofolate = 7,8-dihydrofolate + dTMP. It functions in the pathway pyrimidine metabolism; dTTP biosynthesis. In terms of biological role, catalyzes the reductive methylation of 2'-deoxyuridine-5'-monophosphate (dUMP) to 2'-deoxythymidine-5'-monophosphate (dTMP) while utilizing 5,10-methylenetetrahydrofolate (mTHF) as the methyl donor and reductant in the reaction, yielding dihydrofolate (DHF) as a by-product. This enzymatic reaction provides an intracellular de novo source of dTMP, an essential precursor for DNA biosynthesis. The protein is Thymidylate synthase of Nitrosococcus oceani (strain ATCC 19707 / BCRC 17464 / JCM 30415 / NCIMB 11848 / C-107).